Here is a 1909-residue protein sequence, read N- to C-terminus: NFX1-type zinc finger-containing protein 1 (1909 aa).

Composition is skewed to basic and acidic residues over residues 1–12 (MEDRRPHLEARP) and 76–107 (RNQEGHTSDEARDQRQSQNDTRRRNDDQEGRS). 2 disordered regions span residues 1-133 (MEDR…QPQQ) and 787-813 (TQSASPAGPENTAQAEGEEEEEGEEEG). A compositionally biased stretch (polar residues) spans 113–122 (SSDTFQQWHT). A compositionally biased stretch (acidic residues) spans 802 to 813 (EGEEEEEGEEEG). Residues 939–964 (RRRILSYERQYRTWAERMAELRLQED) adopt a coiled-coil conformation. 4 NF-X1-type zinc fingers span residues 1291-1313 (CGHVCTRACHPYDSSHKEFQCMK), 1375-1393 (CGHRCSHLCGEDCVRLCSE), 1433-1455 (CGHPCPGSCHSCFEGRFHERCQQ), and 1463-1480 (CSHKCQEPCTGECPPCQR). Positions 1733-1764 (LAKKRLSFSSQELSDLQSEIQRLTYLVNLLMR) form a coiled coil. The RZ-type zinc finger occupies 1818-1889 (ISDEERVQIV…LASEMDGAQH (72 aa)). Zn(2+) contacts are provided by Cys-1840, His-1844, Cys-1860, and Cys-1863.

It belongs to the ZNFX1 family. Interacts with MAVS.

It localises to the mitochondrion outer membrane. It is found in the cytoplasm. The protein localises to the stress granule. Its function is as follows. RNA-binding protein that initiates the antiviral response and is required to restrict the replication of RNA viruses. Acts as a double-stranded RNA (dsRNA) sensor that recognizes viral RNA and then interacts with MAVS to initiate the type I interferon response. Also required for immunity against some bacteria, such as mycobacteria. This Mus musculus (Mouse) protein is NFX1-type zinc finger-containing protein 1.